The following is a 346-amino-acid chain: Methylthioribose-1-phosphate isomerase (346 aa).

Residues 46-48, arginine 89, and glutamine 196 contribute to the substrate site; that span reads RGA. Aspartate 237 acts as the Proton donor in catalysis. A substrate-binding site is contributed by 247 to 248; sequence NK.

This sequence belongs to the eIF-2B alpha/beta/delta subunits family. MtnA subfamily.

It catalyses the reaction 5-(methylsulfanyl)-alpha-D-ribose 1-phosphate = 5-(methylsulfanyl)-D-ribulose 1-phosphate. Its pathway is amino-acid biosynthesis; L-methionine biosynthesis via salvage pathway; L-methionine from S-methyl-5-thio-alpha-D-ribose 1-phosphate: step 1/6. Catalyzes the interconversion of methylthioribose-1-phosphate (MTR-1-P) into methylthioribulose-1-phosphate (MTRu-1-P). The protein is Methylthioribose-1-phosphate isomerase of Geobacter sulfurreducens (strain ATCC 51573 / DSM 12127 / PCA).